A 109-amino-acid polypeptide reads, in one-letter code: MAASELLKSRVENLRDYELVVILTTDTPKEKVEAILEGISKTIAEKEGSFTEVNHWGKRKLAYLIGRYVEGYYVFIKMKAKPSSIRKISTDLRISEQVIRHMAINMDEE.

It belongs to the bacterial ribosomal protein bS6 family.

Functionally, binds together with bS18 to 16S ribosomal RNA. This chain is Small ribosomal subunit protein bS6, found in Dehalococcoides mccartyi (strain CBDB1).